Here is an 89-residue protein sequence, read N- to C-terminus: Large ribosomal subunit protein bL27 (89 aa).

The segment at 1–24 (MAHKKGTGSTRNGRDSNAKRLGVK) is disordered.

The protein belongs to the bacterial ribosomal protein bL27 family.

The polypeptide is Large ribosomal subunit protein bL27 (Synechococcus sp. (strain JA-2-3B'a(2-13)) (Cyanobacteria bacterium Yellowstone B-Prime)).